The primary structure comprises 230 residues: Ureidoacrylate amidohydrolase RutB (230 aa).

Catalysis depends on Asp-24, which acts as the Proton acceptor. Lys-133 is an active-site residue. Cys-166 (nucleophile) is an active-site residue.

The protein belongs to the isochorismatase family. RutB subfamily.

The catalysed reaction is (Z)-3-ureidoacrylate + H2O + H(+) = (Z)-3-aminoacrylate + NH4(+) + CO2. The enzyme catalyses (Z)-3-ureidoacrylate + H2O = (Z)-3-aminoacrylate + carbamate + H(+). It carries out the reaction (Z)-2-methylureidoacrylate + H2O + H(+) = (Z)-2-methylaminoacrylate + NH4(+) + CO2. Its function is as follows. Hydrolyzes ureidoacrylate to form aminoacrylate and carbamate. The carbamate hydrolyzes spontaneously, thereby releasing one of the nitrogen atoms of the pyrimidine ring as ammonia and one of its carbon atoms as CO2. This chain is Ureidoacrylate amidohydrolase RutB, found in Escherichia coli O44:H18 (strain 042 / EAEC).